The chain runs to 28 residues: Seed allergenic protein 1 (28 aa).

Residues 1–28 (VTXEEGXYSISDQSKVGEQXIRSPDREM) form a disordered region.

This chain is Seed allergenic protein 1, found in Prunus dulcis (Almond).